The following is a 442-amino-acid chain: Putative ammonium transporter sll1017 (442 aa).

The next 13 helical transmembrane spans lie at 5-25 (NFPLARYVLGAMLAFLFVGVA), 44-64 (LFLLAAAVLVLFMQAGFAMLE), 81-101 (TFDVCVGVLLYFLFGYSLMYG), 104-124 (PVLGGFFGWGGFGITNNLDNV), 133-153 (WLFQAAFAATAATIVSGAVMG), 155-175 (MYFKAYLIYSAVITGLVYPIS), 193-213 (FAGSLLVHSVGGFAALAAVVV), 240-260 (GVFILWVGWYGFNPGSQLAFV), 269-289 (MLIAVNTTLSAAAGGLAALAF), 299-319 (PNLLVTLNGILGGLVGITAGC), 325-345 (WSAIAIGVVAGILSVLGTKLL), 354-374 (VGAWPVHGLCGIWGGIAVGIF), and 386-406 (IVGSLVIPFWAFITMFFLFYV).

The protein belongs to the ammonia transporter channel (TC 1.A.11.2) family.

The protein resides in the cell membrane. In Synechocystis sp. (strain ATCC 27184 / PCC 6803 / Kazusa), this protein is Putative ammonium transporter sll1017.